Consider the following 105-residue polypeptide: MASITMTTSFLSTTNLTKGSPRITQRRLVVANAAKGAQVESVQMSGERKTEGNNGRREMMFAAAAAAICSVAGVATAEPKRGSAEAKKAYAPVCVTMPTARICRN.

The N-terminal 77 residues, 1 to 77, are a transit peptide targeting the chloroplast; the sequence is MASITMTTSF…ICSVAGVATA (77 aa).

Post-translationally, the maturation of the PSII-T precursor to its final form occurs through a two step process. First, a stromal intermediate is formed, which, upon translocation into the thylakoid membrane, is processed to the mature protein.

It localises to the plastid. Its subcellular location is the chloroplast thylakoid membrane. In terms of biological role, may be a component of the oxygen-evolving complex. The chain is Photosystem II 5 kDa protein, chloroplastic (PSBT) from Gossypium hirsutum (Upland cotton).